Reading from the N-terminus, the 310-residue chain is Ribosomal RNA small subunit methyltransferase H (310 aa).

S-adenosyl-L-methionine-binding positions include 33–35 (AGH), D53, F79, D100, and Q107.

It belongs to the methyltransferase superfamily. RsmH family.

It localises to the cytoplasm. The enzyme catalyses cytidine(1402) in 16S rRNA + S-adenosyl-L-methionine = N(4)-methylcytidine(1402) in 16S rRNA + S-adenosyl-L-homocysteine + H(+). Its function is as follows. Specifically methylates the N4 position of cytidine in position 1402 (C1402) of 16S rRNA. This is Ribosomal RNA small subunit methyltransferase H from Clostridium beijerinckii (strain ATCC 51743 / NCIMB 8052) (Clostridium acetobutylicum).